The following is an 89-amino-acid chain: N.vectensis toxin 7 (89 aa).

Positions 1-21 (MASFFKIAVICLVMLVVCSNA) are cleaved as a signal peptide. Cystine bridges form between C44–C77, C46–C69, and C62–C78.

In terms of tissue distribution, expressed in ectodermal gland cells.

Functionally, probable toxin. The polypeptide is N.vectensis toxin 7 (Nematostella vectensis (Starlet sea anemone)).